Reading from the N-terminus, the 115-residue chain is MKVEKEFPLMNFSLRRLPLFILIKTRKQTIEMNLRKKGHGIFFSRFGVFISKKKNHINICTLLLTKHPYTKGFPRQNVVETILFRRNSKTHFGRPATRRRPLGEREVNPSARSLG.

Residues 90 to 100 (THFGRPATRRR) are compositionally biased toward basic residues. The segment at 90–115 (THFGRPATRRRPLGEREVNPSARSLG) is disordered.

This is an uncharacterized protein from Saccharomyces cerevisiae (strain ATCC 204508 / S288c) (Baker's yeast).